A 226-amino-acid chain; its full sequence is 2-C-methyl-D-erythritol 4-phosphate cytidylyltransferase (226 aa).

The protein belongs to the IspD/TarI cytidylyltransferase family. IspD subfamily.

It carries out the reaction 2-C-methyl-D-erythritol 4-phosphate + CTP + H(+) = 4-CDP-2-C-methyl-D-erythritol + diphosphate. The protein operates within isoprenoid biosynthesis; isopentenyl diphosphate biosynthesis via DXP pathway; isopentenyl diphosphate from 1-deoxy-D-xylulose 5-phosphate: step 2/6. Its function is as follows. Catalyzes the formation of 4-diphosphocytidyl-2-C-methyl-D-erythritol from CTP and 2-C-methyl-D-erythritol 4-phosphate (MEP). The protein is 2-C-methyl-D-erythritol 4-phosphate cytidylyltransferase of Bacillus cytotoxicus (strain DSM 22905 / CIP 110041 / 391-98 / NVH 391-98).